The chain runs to 598 residues: Auxin response factor 22 (598 aa).

The segment at residues 124 to 226 (NSFTKVLTAS…ELRVGIRRAG (103 aa)) is a DNA-binding region (TF-B3). The 82-residue stretch at 509-590 (RTCTKVQMQG…MVKKILIFKR (82 aa)) folds into the PB1 domain.

This sequence belongs to the ARF family. As to quaternary structure, homodimers and heterodimers.

The protein localises to the nucleus. Its function is as follows. Auxin response factors (ARFs) are transcriptional factors that bind specifically to the DNA sequence 5'-TGTCTC-3' found in the auxin-responsive promoter elements (AuxREs). Could act as transcriptional activator or repressor. Formation of heterodimers with Aux/IAA proteins may alter their ability to modulate early auxin response genes expression. The protein is Auxin response factor 22 (ARF22) of Arabidopsis thaliana (Mouse-ear cress).